A 360-amino-acid chain; its full sequence is Zinc finger protein ztf-2 (360 aa).

A disordered region spans residues 19 to 41; that stretch reads LSSPEKEHRRKRRRGEVANPSNT. 3 consecutive C2H2-type zinc fingers follow at residues 87 to 109, 115 to 138, and 180 to 203; these read RTCS…KRVH, FKCR…AKTH, and YRCQ…SHLH. Low complexity predominate over residues 248-260; sequence PLSPCRSESSSDS. The interval 248 to 272 is disordered; the sequence is PLSPCRSESSSDSGIQTDPEEEASI.

As to expression, expressed in pharyngeal epithelium/arcade, which connects the pharynx to the mouth.

Transcription factor. Represses gene expression, probably via binding to DNA consensus sequence 5'-[AT][CT]TTCC[AC][AG]-3' in promoter regions. May play a role in pharynx morphogenesis. This is Zinc finger protein ztf-2 from Caenorhabditis elegans.